A 92-amino-acid polypeptide reads, in one-letter code: Small ribosomal subunit protein uS19 (92 aa).

Belongs to the universal ribosomal protein uS19 family.

Its function is as follows. Protein S19 forms a complex with S13 that binds strongly to the 16S ribosomal RNA. The chain is Small ribosomal subunit protein uS19 from Picosynechococcus sp. (strain ATCC 27264 / PCC 7002 / PR-6) (Agmenellum quadruplicatum).